The sequence spans 421 residues: Medium-chain specific acyl-CoA dehydrogenase, mitochondrial (421 aa).

The N-terminal 25 residues, 1–25 (MIALFRRSCGVLRSLSHFDWRSQHT), are a transit peptide targeting the mitochondrion. Lysine 69 is modified (N6-acetyllysine; alternate). Lysine 69 is modified (N6-succinyllysine; alternate). An N6-acetyllysine modification is found at lysine 79. 158-167 (YCVTEPVAGS) serves as a coordination point for FAD. Serine 167 serves as a coordination point for octanoyl-CoA. Lysine 179 carries the post-translational modification N6-succinyllysine. Residue 191–193 (WIT) participates in FAD binding. An N6-acetyllysine; alternate modification is found at lysine 212. Position 212 is an N6-succinyllysine; alternate (lysine 212). Serine 216 is a binding site for octanoyl-CoA. 3 positions are modified to N6-acetyllysine; alternate: lysine 217, lysine 259, and lysine 271. Lysine 217, lysine 259, and lysine 271 each carry N6-succinyllysine; alternate. Aspartate 278 serves as a coordination point for octanoyl-CoA. Lysine 279 is subject to N6-acetyllysine. Residue arginine 281 coordinates octanoyl-CoA. Lysine 301 carries the N6-acetyllysine modification. FAD contacts are provided by residues 306-308 (RKT) and 316-317 (HQ). The octanoyl-CoA site is built by arginine 349 and threonine 351. Residue threonine 351 is modified to Phosphothreonine. 374–378 (QIFGG) is an FAD binding site. Position 401 (glutamate 401) interacts with octanoyl-CoA. Glutamate 401 serves as the catalytic Proton acceptor. 402–405 (GTAQ) contacts FAD.

The protein belongs to the acyl-CoA dehydrogenase family. In terms of assembly, homotetramer. Interacts with the heterodimeric electron transfer flavoprotein ETF. It depends on FAD as a cofactor. In terms of processing, acetylated. Could occur at proximity of the cofactor-binding sites and reduce the catalytic activity. Could be deacetylated by SIRT3.

It localises to the mitochondrion matrix. The enzyme catalyses a medium-chain 2,3-saturated fatty acyl-CoA + oxidized [electron-transfer flavoprotein] + H(+) = a medium-chain (2E)-enoyl-CoA + reduced [electron-transfer flavoprotein]. It carries out the reaction pentanoyl-CoA + oxidized [electron-transfer flavoprotein] + H(+) = (2E)-pentenoyl-CoA + reduced [electron-transfer flavoprotein]. It catalyses the reaction hexanoyl-CoA + oxidized [electron-transfer flavoprotein] + H(+) = (2E)-hexenoyl-CoA + reduced [electron-transfer flavoprotein]. The catalysed reaction is octanoyl-CoA + oxidized [electron-transfer flavoprotein] + H(+) = (2E)-octenoyl-CoA + reduced [electron-transfer flavoprotein]. The enzyme catalyses decanoyl-CoA + oxidized [electron-transfer flavoprotein] + H(+) = (2E)-decenoyl-CoA + reduced [electron-transfer flavoprotein]. It carries out the reaction dodecanoyl-CoA + oxidized [electron-transfer flavoprotein] + H(+) = (2E)-dodecenoyl-CoA + reduced [electron-transfer flavoprotein]. It catalyses the reaction tetradecanoyl-CoA + oxidized [electron-transfer flavoprotein] + H(+) = (2E)-tetradecenoyl-CoA + reduced [electron-transfer flavoprotein]. The catalysed reaction is oxidized [electron-transfer flavoprotein] + hexadecanoyl-CoA + H(+) = (2E)-hexadecenoyl-CoA + reduced [electron-transfer flavoprotein]. It participates in lipid metabolism; mitochondrial fatty acid beta-oxidation. Functionally, medium-chain specific acyl-CoA dehydrogenase is one of the acyl-CoA dehydrogenases that catalyze the first step of mitochondrial fatty acid beta-oxidation, an aerobic process breaking down fatty acids into acetyl-CoA and allowing the production of energy from fats. The first step of fatty acid beta-oxidation consists in the removal of one hydrogen from C-2 and C-3 of the straight-chain fatty acyl-CoA thioester, resulting in the formation of trans-2-enoyl-CoA. Electron transfer flavoprotein (ETF) is the electron acceptor that transfers electrons to the main mitochondrial respiratory chain via ETF-ubiquinone oxidoreductase (ETF dehydrogenase). Among the different mitochondrial acyl-CoA dehydrogenases, medium-chain specific acyl-CoA dehydrogenase acts specifically on acyl-CoAs with saturated 6 to 12 carbons long primary chains. This chain is Medium-chain specific acyl-CoA dehydrogenase, mitochondrial, found in Bos taurus (Bovine).